Here is a 205-residue protein sequence, read N- to C-terminus: Purine catabolism protein PucB (205 aa).

It participates in purine metabolism; hypoxanthine degradation. Its function is as follows. Required for xanthine dehydrogenase activity. Could be involved in formation of the molybdenum cofactor required by xanthine dehydrogenase. This Bacillus subtilis (strain 168) protein is Purine catabolism protein PucB (pucB).